The following is a 704-amino-acid chain: Elongation factor G (704 aa).

One can recognise a tr-type G domain in the interval 10 to 290; sequence NKVRNIGIMA…AVVDFLPNPL (281 aa). GTP-binding positions include 19–26, 83–87, and 137–140; these read AHIDAGKT, DTPGH, and NKMD.

This sequence belongs to the TRAFAC class translation factor GTPase superfamily. Classic translation factor GTPase family. EF-G/EF-2 subfamily.

The protein resides in the cytoplasm. Functionally, catalyzes the GTP-dependent ribosomal translocation step during translation elongation. During this step, the ribosome changes from the pre-translocational (PRE) to the post-translocational (POST) state as the newly formed A-site-bound peptidyl-tRNA and P-site-bound deacylated tRNA move to the P and E sites, respectively. Catalyzes the coordinated movement of the two tRNA molecules, the mRNA and conformational changes in the ribosome. This Paenarthrobacter aurescens (strain TC1) protein is Elongation factor G.